The following is a 315-amino-acid chain: MTHPLFLEPVFKERLWGGTKLRDAFGYAIPSQKTGECWAVSAHAHGSSSVKNGPLAGKTLDQVWKDHPEIFGFPDGKVFPLLVKLLDANMDLSVQVHPDDDYAKLHENGDLGKTECWYIIDCKDDAELILGHHASTKEEFKQRIESGDWNGLLRRIKIKPGDFFYVPSGTLHALCKGTLVLEIQQNSDTTYRVYDYDRCNDQGQKRTLHIEKAMEVITIPHIDKVHTPEVKEVGNAEIIVYVQSDYFSVYKWKISGRAAFPSYQTYLLGSVLSGSGRIINNGIQYECNAGSHFILPAHFGEFTIEGTCEFMISHP.

Zn(2+) contacts are provided by Gln-95, His-97, Glu-115, and His-172. Arg-192 is an active-site residue.

This sequence belongs to the mannose-6-phosphate isomerase type 1 family. Zn(2+) is required as a cofactor.

The enzyme catalyses D-mannose 6-phosphate = D-fructose 6-phosphate. Its function is as follows. Seems to be involved in the degradation of glucomannan. The polypeptide is Probable mannose-6-phosphate isomerase GmuF (gmuF) (Bacillus subtilis (strain 168)).